We begin with the raw amino-acid sequence, 175 residues long: 19.0 kDa class II heat shock protein (175 aa).

Residues 42-165 form the sHSP domain; that stretch reads DRRAMANTPM…KPRVVEVKVA (124 aa). The disordered stretch occupies residues 145–175; the sequence is TVDKKPPPEPKKPRVVEVKVAGAGEPKGKGK. Positions 146–161 are enriched in basic and acidic residues; sequence VDKKPPPEPKKPRVVE.

The protein belongs to the small heat shock protein (HSP20) family. As to quaternary structure, may form oligomeric structures.

The protein localises to the cytoplasm. The protein is 19.0 kDa class II heat shock protein (HSP19.0) of Oryza sativa subsp. japonica (Rice).